A 234-amino-acid chain; its full sequence is Large ribosomal subunit protein uL1 (234 aa).

Belongs to the universal ribosomal protein uL1 family. In terms of assembly, part of the 50S ribosomal subunit.

In terms of biological role, binds directly to 23S rRNA. The L1 stalk is quite mobile in the ribosome, and is involved in E site tRNA release. Protein L1 is also a translational repressor protein, it controls the translation of the L11 operon by binding to its mRNA. This Maridesulfovibrio salexigens (strain ATCC 14822 / DSM 2638 / NCIMB 8403 / VKM B-1763) (Desulfovibrio salexigens) protein is Large ribosomal subunit protein uL1.